Reading from the N-terminus, the 500-residue chain is Probable cytosol aminopeptidase (500 aa).

Positions 268 and 273 each coordinate Mn(2+). Residue K280 is part of the active site. Residues D291, D350, and E352 each coordinate Mn(2+). R354 is a catalytic residue.

It belongs to the peptidase M17 family. Requires Mn(2+) as cofactor.

Its subcellular location is the cytoplasm. The enzyme catalyses Release of an N-terminal amino acid, Xaa-|-Yaa-, in which Xaa is preferably Leu, but may be other amino acids including Pro although not Arg or Lys, and Yaa may be Pro. Amino acid amides and methyl esters are also readily hydrolyzed, but rates on arylamides are exceedingly low.. It carries out the reaction Release of an N-terminal amino acid, preferentially leucine, but not glutamic or aspartic acids.. Functionally, presumably involved in the processing and regular turnover of intracellular proteins. Catalyzes the removal of unsubstituted N-terminal amino acids from various peptides. The protein is Probable cytosol aminopeptidase of Azoarcus sp. (strain BH72).